The following is a 317-amino-acid chain: Ornithine carbamoyltransferase (317 aa).

Carbamoyl phosphate is bound by residues 57–60 (STRT), Gln84, Arg108, and 135–138 (HPCQ). L-ornithine-binding positions include Asn166, Asp230, and 234–235 (SM). Residues 270-271 (CL) and Arg298 each bind carbamoyl phosphate.

Belongs to the aspartate/ornithine carbamoyltransferase superfamily. OTCase family. In terms of assembly, homododecamer.

The protein resides in the cytoplasm. It carries out the reaction carbamoyl phosphate + L-ornithine = L-citrulline + phosphate + H(+). The protein operates within amino-acid biosynthesis; L-arginine biosynthesis; L-arginine from L-ornithine and carbamoyl phosphate: step 1/3. Functionally, reversibly catalyzes the transfer of the carbamoyl group from carbamoyl phosphate (CP) to the N(epsilon) atom of ornithine (ORN) to produce L-citrulline. This is Ornithine carbamoyltransferase from Pyrococcus horikoshii (strain ATCC 700860 / DSM 12428 / JCM 9974 / NBRC 100139 / OT-3).